A 430-amino-acid polypeptide reads, in one-letter code: MVQTIDQAASLRGTVSLPADKSISHRSALLSALGTGRSRVYNFPDSADPQSTLDCVRTLGIEAGRNDEGVLAIHGRGLGGLHPPSEPLDCGNSGTTMRLLSGMMAGQEFGSVLTGDESLQQRPMERIADPLQAMGARIDLRSGHAPIRIRPQRSDGLRPLEYRLPVASAQVKSCVLLAGLYASGRTVVIETTPSRDHTERMLGLEVQEVGGERHIIVEEDHTVPAVDWSVPGDFSGAAFFLVAGTLVPDSELHLDDVGLNPSRTALLDVLDGMGADITVENERVQGSEPVGDITVRSASLSGIDIGGRLIPNLIDEIPVIAVAAACAEGRTEIRDAEELRVKETDRLHAMAQNLEALGAKVQEREDGLIIDGNGPNLLGAAVTSHDDHRIAMAMGVAGLVAHGTTTISDAECARVSFPGFWDELSRVSVS.

Residues Lys21, Ser22, and Arg26 each coordinate 3-phosphoshikimate. Position 21 (Lys21) interacts with phosphoenolpyruvate. Positions 94 and 122 each coordinate phosphoenolpyruvate. 4 residues coordinate 3-phosphoshikimate: Ser168, Gln170, Asp315, and Lys342. Gln170 is a phosphoenolpyruvate binding site. Asp315 functions as the Proton acceptor in the catalytic mechanism. Phosphoenolpyruvate-binding residues include Arg346 and Arg389.

This sequence belongs to the EPSP synthase family. As to quaternary structure, monomer.

It localises to the cytoplasm. It carries out the reaction 3-phosphoshikimate + phosphoenolpyruvate = 5-O-(1-carboxyvinyl)-3-phosphoshikimate + phosphate. It functions in the pathway metabolic intermediate biosynthesis; chorismate biosynthesis; chorismate from D-erythrose 4-phosphate and phosphoenolpyruvate: step 6/7. In terms of biological role, catalyzes the transfer of the enolpyruvyl moiety of phosphoenolpyruvate (PEP) to the 5-hydroxyl of shikimate-3-phosphate (S3P) to produce enolpyruvyl shikimate-3-phosphate and inorganic phosphate. This chain is 3-phosphoshikimate 1-carboxyvinyltransferase, found in Salinibacter ruber (strain DSM 13855 / M31).